The chain runs to 326 residues: uncharacterized protein (326 aa).

The tract at residues 293 to 326 (HRNYDANHSTSGEEENSGSRSRIAELSQSTIHRR) is disordered.

This is an uncharacterized protein from Oryza latifolia (Indian wild rice).